A 192-amino-acid polypeptide reads, in one-letter code: Nucleosome assembly protein 1-like 5 (192 aa).

Polar residues predominate over residues 1–12; sequence MADSQNQGSAEP. Residues 1–76 are disordered; it reads MADSQNQGSA…APKPRNDFIE (76 aa). Composition is skewed to low complexity over residues 15–28 and 40–55; these read AAAA…AAAA and GDSD…VVGQ. Residues 86 to 112 adopt a coiled-coil conformation; the sequence is VLALKKLQKRCDKIEAKFDKEFQALEK. The disordered stretch occupies residues 136–192; sequence AWTLEGDEEDDDDDEYEDEEEGEEEDEEEEEPAAEAAGTAAAKDEGPHSAVPDDAKK. A compositionally biased stretch (acidic residues) spans 140 to 168; it reads EGDEEDDDDDEYEDEEEGEEEDEEEEEPA. Residues 177–192 are compositionally biased toward basic and acidic residues; that stretch reads AKDEGPHSAVPDDAKK.

The protein belongs to the nucleosome assembly protein (NAP) family.

It is found in the nucleus. The sequence is that of Nucleosome assembly protein 1-like 5 (NAP1L5) from Bos taurus (Bovine).